Reading from the N-terminus, the 248-residue chain is Probable transcriptional regulatory protein BRADO1143 (248 aa).

The protein belongs to the TACO1 family.

It is found in the cytoplasm. The protein is Probable transcriptional regulatory protein BRADO1143 of Bradyrhizobium sp. (strain ORS 278).